Reading from the N-terminus, the 327-residue chain is MEAIKGSDVNVPDAVFAWLLDGRGGVKPLEDNDVIDSQHPCWLHLNYTHPDSARWLASTPLLPNNVRDALAGESSRPRVSRMGEGTLITLRCINGSTDERPDQLVAMRLYMDERFIVSTRQRKVLALDDVVSDLQEGTGPVDCGSWLVDVCDALTDHASEFIEELHDKIIDLEDNLLDQQIPPRGFLALLRKQLIVMRRYMAPQRDVYARLASERLPWMSDDHRRRMQDIADRLGRGLDEIDACIARTGIMADEIAQVMQESLARRTYTMSLMAMVFLPSTFLTGLFGVNLGGIPGGGWRFGFSLFCILLVVLIGGVTLWLHRSKWL.

Residues 1–273 (MEAIKGSDVN…ARRTYTMSLM (273 aa)) lie on the Cytoplasmic side of the membrane. The chain crosses the membrane as a helical span at residues 274-294 (AMVFLPSTFLTGLFGVNLGGI). Residues 295–300 (PGGGWR) are Periplasmic-facing. Residues 301-321 (FGFSLFCILLVVLIGGVTLWL) traverse the membrane as a helical segment. The Cytoplasmic portion of the chain corresponds to 322–327 (HRSKWL).

It belongs to the CorA metal ion transporter (MIT) (TC 1.A.35) family.

It is found in the cell inner membrane. It catalyses the reaction Zn(2+)(out) + H(+)(out) = Zn(2+)(in) + H(+)(in). Its function is as follows. Zinc transporter. Acts as a Zn(2+):proton symporter, which likely mediates zinc ion uptake. The polypeptide is Zinc transport protein ZntB (Salmonella enteritidis PT4 (strain P125109)).